We begin with the raw amino-acid sequence, 157 residues long: Ribosome maturation factor RimP (157 aa).

Belongs to the RimP family.

The protein localises to the cytoplasm. In terms of biological role, required for maturation of 30S ribosomal subunits. The protein is Ribosome maturation factor RimP of Synechococcus sp. (strain JA-3-3Ab) (Cyanobacteria bacterium Yellowstone A-Prime).